The chain runs to 484 residues: Antibiotic efflux pump outer membrane protein ArpC (484 aa).

An N-terminal signal peptide occupies residues 1-17; sequence MTKSLLSLAVTAFILGG. The N-palmitoyl cysteine moiety is linked to residue Cys-18. Residue Cys-18 is the site of S-diacylglycerol cysteine attachment.

It belongs to the outer membrane factor (OMF) (TC 1.B.17) family.

It localises to the cell outer membrane. In terms of biological role, the outer membrane component of an antibiotic efflux pump. Confers resistance to numerous structurally unrelated antibiotics such as carbenicillin, chloramphenicol, erythromycin, novobiocin, streptomycin and tetracycline. Is not involved in organic solvent efflux. The protein is Antibiotic efflux pump outer membrane protein ArpC (arpC) of Pseudomonas putida (Arthrobacter siderocapsulatus).